The primary structure comprises 209 residues: Probable nicotinate-nucleotide adenylyltransferase (209 aa).

This sequence belongs to the NadD family.

It carries out the reaction nicotinate beta-D-ribonucleotide + ATP + H(+) = deamido-NAD(+) + diphosphate. It functions in the pathway cofactor biosynthesis; NAD(+) biosynthesis; deamido-NAD(+) from nicotinate D-ribonucleotide: step 1/1. Its function is as follows. Catalyzes the reversible adenylation of nicotinate mononucleotide (NaMN) to nicotinic acid adenine dinucleotide (NaAD). In Streptococcus pneumoniae serotype 4 (strain ATCC BAA-334 / TIGR4), this protein is Probable nicotinate-nucleotide adenylyltransferase.